Consider the following 646-residue polypeptide: Chaperone protein DnaK (646 aa).

Position 198 is a phosphothreonine; by autocatalysis (Thr198). Positions 603-646 are disordered; sequence EQAQQAGGAEGFDPNAFQGGDAGQQKADDGVVDAEFTEVKDDKK. A compositionally biased stretch (low complexity) spans 618–627; sequence AFQGGDAGQQ.

The protein belongs to the heat shock protein 70 family.

Its function is as follows. Acts as a chaperone. This chain is Chaperone protein DnaK, found in Acinetobacter baumannii (strain ACICU).